We begin with the raw amino-acid sequence, 253 residues long: Imidazole glycerol phosphate synthase subunit HisF (253 aa).

Active-site residues include D11 and D130.

This sequence belongs to the HisA/HisF family. As to quaternary structure, heterodimer of HisH and HisF.

The protein resides in the cytoplasm. It catalyses the reaction 5-[(5-phospho-1-deoxy-D-ribulos-1-ylimino)methylamino]-1-(5-phospho-beta-D-ribosyl)imidazole-4-carboxamide + L-glutamine = D-erythro-1-(imidazol-4-yl)glycerol 3-phosphate + 5-amino-1-(5-phospho-beta-D-ribosyl)imidazole-4-carboxamide + L-glutamate + H(+). The protein operates within amino-acid biosynthesis; L-histidine biosynthesis; L-histidine from 5-phospho-alpha-D-ribose 1-diphosphate: step 5/9. Functionally, IGPS catalyzes the conversion of PRFAR and glutamine to IGP, AICAR and glutamate. The HisF subunit catalyzes the cyclization activity that produces IGP and AICAR from PRFAR using the ammonia provided by the HisH subunit. This chain is Imidazole glycerol phosphate synthase subunit HisF, found in Ruegeria pomeroyi (strain ATCC 700808 / DSM 15171 / DSS-3) (Silicibacter pomeroyi).